The sequence spans 147 residues: Ubiquitin-conjugating enzyme E2 D2 (147 aa).

In terms of domain architecture, UBC core spans 1–147; the sequence is MALKRIHKEL…SREWTQKYAM (147 aa). The active-site Glycyl thioester intermediate is the Cys-85.

Belongs to the ubiquitin-conjugating enzyme family. As to quaternary structure, interacts with SCF (SKP1-CUL1-F-box protein) E3 ubiquitin ligase complex. Interacts with CNOT4 (via RING domain). Interacts with E3 ubiquitin-protein ligases CBLC, PJA1 and PJA2. Interacts with PDZRN3. Interacts with PPP1R11. Interacts with E3 ubiquitin-protein ligase PHF7; the interaction inhibits cleavage of PHF7 and promotes association of the complex with the nucleosome core particle.

The enzyme catalyses S-ubiquitinyl-[E1 ubiquitin-activating enzyme]-L-cysteine + [E2 ubiquitin-conjugating enzyme]-L-cysteine = [E1 ubiquitin-activating enzyme]-L-cysteine + S-ubiquitinyl-[E2 ubiquitin-conjugating enzyme]-L-cysteine.. It carries out the reaction S-ubiquitinyl-[E1 ubiquitin-activating enzyme]-L-cysteine + [acceptor protein]-L-lysine = [E1 ubiquitin-activating enzyme]-L-cysteine + N(6)-monoubiquitinyl-[acceptor protein]-L-lysine.. It participates in protein modification; protein ubiquitination. Its function is as follows. Accepts ubiquitin from the E1 complex and catalyzes its covalent attachment to other proteins. In vitro catalyzes 'Lys-48'-linked polyubiquitination. Mediates the selective degradation of short-lived and abnormal proteins. Functions in the E6/E6-AP-induced ubiquitination of p53/TP53. Mediates ubiquitination of PEX5 and SQSTM1 and autoubiquitination of STUB1 and TRAF6. Involved in the signal-induced conjugation and subsequent degradation of NFKBIA, FBXW2-mediated GCM1 ubiquitination and degradation, MDM2-dependent degradation of p53/TP53 and the activation of MAVS in the mitochondria by RIGI in response to viral infection. Essential for viral activation of IRF3. This chain is Ubiquitin-conjugating enzyme E2 D2 (UBE2D2), found in Sus scrofa (Pig).